The primary structure comprises 628 residues: MAGENPKKEGVDARFAGIYSDPKFKNTKTKDHKIKLDSRFSKKDLEVQHKSKVDKYGRKIKNAQNNRELEDFDKYFEKEAENDEDSEVNAKTVVDRARGEVPDDYVSSSDEFTSSDSESSGESEVESEEENEVEIENAKPESGDISKNLAVVNLDWDHVKSEDLMITFSSFVPKGGKIERVAIYPSEFGKERMQREEVEGPPKELFQKKNKNKTSKKKKTDDSDSDMDIGIKDLYEEGDADKDVDSRALRQYQLDRLRYYYAIVYCSDTTTSKAIYDNCDGTEYESTANMFDLRYVPDGMTFDDDVRDECSILPKNYRPHQFSTDALQHSSVKLTWDETPADRVEVAKRAFTQKEIDDMDFKAYLASDSDESDGQVDEEAKNKLKSLVGDFGFNSKKETPNDEDEEVDMEITFTPALEGGNEKSSEDKEETTIEKIRRKEKERRKARKQKVKELKQQSEKDKKSKLKSVNKKHTNDEEEIEKNAKSKAELELLMDDDDDTETQGTINNKAHFNMNEILRSEKEKHKKGRYQKKERIVEDTFTPDLEDPRFKEVFEDHDFAIDPTQPEFKGTQAMSKILKERSKRVKNKKRKLGGSENNMTNNADDNEDIGNLVNKLKKKSKSSKKVKV.

2 disordered regions span residues 78–147 (KEAE…DISK) and 192–229 (RMQR…DMDI). Phosphoserine is present on serine 86. Residues 104–118 (DYVSSSDEFTSSDSE) show a composition bias toward low complexity. Residues 119 to 135 (SSGESEVESEEENEVEI) are compositionally biased toward acidic residues. The segment covering 192 to 207 (RMQREEVEGPPKELFQ) has biased composition (basic and acidic residues). Residues 208 to 218 (KKNKNKTSKKK) are compositionally biased toward basic residues. Phosphothreonine is present on threonine 220. Phosphoserine is present on residues serine 223, serine 225, serine 367, serine 369, and serine 372. Residues 412–541 (TFTPALEGGN…KKERIVEDTF (130 aa)) form a disordered region. Basic and acidic residues predominate over residues 420 to 439 (GNEKSSEDKEETTIEKIRRK). The stretch at 426–495 (EDKEETTIEK…SKAELELLMD (70 aa)) forms a coiled coil. The span at 440–450 (EKERRKARKQK) shows a compositional bias: basic residues. The span at 451–462 (VKELKQQSEKDK) shows a compositional bias: basic and acidic residues. Positions 463–472 (KSKLKSVNKK) are enriched in basic residues. Over residues 481–490 (EKNAKSKAEL) the composition is skewed to basic and acidic residues. Residues 492 to 501 (LLMDDDDDTE) are compositionally biased toward acidic residues. The residue at position 542 (threonine 542) is a Phosphothreonine. Basic residues-rich tracts occupy residues 582–592 (SKRVKNKKRKL) and 615–628 (KLKK…KVKV). The disordered stretch occupies residues 582–628 (SKRVKNKKRKLGGSENNMTNNADDNEDIGNLVNKLKKKSKSSKKVKV).

The protein belongs to the ESF1 family. As to quaternary structure, interacts with KRR1, NOP1, NSR1, PUF6 and UTP22, proteins involved in 18S rRNA synthesis. Also interacts with ribosomal proteins RPS1, RPS3, RPS4, RPS6, RPS11, RPL2, RPL3, RPL4, RPL7, RPL10, RPL20 and RPP0 as well as with the snoRNAs U3 and U14.

The protein localises to the nucleus. It is found in the nucleolus. Involved in the 18S rRNA synthesis. Required for the early cleavages at sites A0, A1 and A2. The chain is Pre-rRNA-processing protein ESF1 (ESF1) from Saccharomyces cerevisiae (strain ATCC 204508 / S288c) (Baker's yeast).